Consider the following 348-residue polypeptide: Probable purine nucleoside permease C285.05 (348 aa).

The first 21 residues, 1-21, serve as a signal peptide directing secretion; the sequence is MLFLKLVASVLALMTIVPAQA.

This sequence belongs to the NUP family.

The protein resides in the endoplasmic reticulum. Probable nucleoside permease that transports adenosine and guanosine. This Schizosaccharomyces pombe (strain 972 / ATCC 24843) (Fission yeast) protein is Probable purine nucleoside permease C285.05.